Reading from the N-terminus, the 405-residue chain is Histone deacetylase clr6 (405 aa).

The tract at residues 6–318 is histone deacetylase; that stretch reads KKVSYFYDED…WTYETGLLAG (313 aa). His-138 is a catalytic residue.

This sequence belongs to the histone deacetylase family. HD type 1 subfamily. In terms of assembly, heterotetramer of alp13, clr6, prw1 and pst2.

The protein localises to the nucleus. It catalyses the reaction N(6)-acetyl-L-lysyl-[histone] + H2O = L-lysyl-[histone] + acetate. Responsible for the deacetylation of lysine residues on the N-terminal part of the core histones (H2A, H2B, H3 and H4). Histone deacetylation gives a tag for epigenetic repression and plays an important role in transcriptional regulation, cell cycle progression and developmental events. Histone deacetylases act via the formation of large multiprotein complexes. Has a role in chromatin assembly and chromosome segregation. This chain is Histone deacetylase clr6 (clr6), found in Schizosaccharomyces pombe (strain 972 / ATCC 24843) (Fission yeast).